We begin with the raw amino-acid sequence, 309 residues long: Olfactory receptor 5B21 (309 aa).

Over 1 to 26 (MENSTEVTEFILLGLTDDPNLQIPLL) the chain is Extracellular. The N-linked (GlcNAc...) asparagine glycan is linked to Asn3. The chain crosses the membrane as a helical span at residues 27–47 (LAFLFIYLITLLGNGGMMVII). The Cytoplasmic segment spans residues 48–55 (HSDSHLHT). Residues 56–76 (PMYFFLSNLSLVDLGYSSAVA) traverse the membrane as a helical segment. Residues 77–95 (PKTVAALRSGDKAISYDGC) are Extracellular-facing. An intrachain disulfide couples Cys95 to Cys177. Residues 96–116 (AAQFFFFVGFATVECYLLASM) traverse the membrane as a helical segment. Residues 117–137 (AYDRHAAVCRPLHYTTTMTAG) are Cytoplasmic-facing. A helical transmembrane segment spans residues 138-158 (VCALLATGSYVSGFLNASIHA). Residues 159-199 (AGTFRLSFCGSNEINHFFCDIPPLLALSCSDTRISKLVVFV) are Extracellular-facing. The chain crosses the membrane as a helical span at residues 200–220 (AGFNVFFTLLVILISYFFICI). Over 221 to 235 (TIQRMHSAEGQKKVF) the chain is Cytoplasmic. Residues 236–256 (STCASHLTALSIFYGTIIFMY) form a helical membrane-spanning segment. The Extracellular segment spans residues 257–270 (LQPNSSQSVDTDKI). N-linked (GlcNAc...) asparagine glycosylation is present at Asn260. A helical transmembrane segment spans residues 271-291 (ASVFYTVVIPMLNPLIYSLRN). Residues 292–309 (KEVKSALWKILNKLYPQY) lie on the Cytoplasmic side of the membrane.

The protein belongs to the G-protein coupled receptor 1 family.

It is found in the cell membrane. Odorant receptor. This chain is Olfactory receptor 5B21, found in Homo sapiens (Human).